An 800-amino-acid polypeptide reads, in one-letter code: Phenylalanine--tRNA ligase beta subunit (800 aa).

A tRNA-binding domain is found at 39–154 (TKEIKNLVVG…TEVKPGTDAL (116 aa)). Residues 408–483 (CFVTPIDISV…RIYGYDKIPS (76 aa)) enclose the B5 domain. Mg(2+) is bound by residues Asp461, Asp467, Glu470, and Glu471. Positions 708 to 800 (PRFPGVSRDI…ALKSEGATIR (93 aa)) constitute an FDX-ACB domain.

This sequence belongs to the phenylalanyl-tRNA synthetase beta subunit family. Type 1 subfamily. In terms of assembly, tetramer of two alpha and two beta subunits. The cofactor is Mg(2+).

It localises to the cytoplasm. It catalyses the reaction tRNA(Phe) + L-phenylalanine + ATP = L-phenylalanyl-tRNA(Phe) + AMP + diphosphate + H(+). This is Phenylalanine--tRNA ligase beta subunit from Staphylococcus saprophyticus subsp. saprophyticus (strain ATCC 15305 / DSM 20229 / NCIMB 8711 / NCTC 7292 / S-41).